A 264-amino-acid polypeptide reads, in one-letter code: Thymidylate synthase (264 aa).

Arginine 21 serves as a coordination point for dUMP. (6R)-5,10-methylene-5,6,7,8-tetrahydrofolate is bound at residue histidine 51. 126–127 (RR) provides a ligand contact to dUMP. Cysteine 146 (nucleophile) is an active-site residue. DUMP-binding positions include 166 to 169 (RSGD), asparagine 177, and 207 to 209 (HLY). Residue aspartate 169 coordinates (6R)-5,10-methylene-5,6,7,8-tetrahydrofolate. A (6R)-5,10-methylene-5,6,7,8-tetrahydrofolate-binding site is contributed by alanine 263.

Belongs to the thymidylate synthase family. Bacterial-type ThyA subfamily. Homodimer.

Its subcellular location is the cytoplasm. It catalyses the reaction dUMP + (6R)-5,10-methylene-5,6,7,8-tetrahydrofolate = 7,8-dihydrofolate + dTMP. Its pathway is pyrimidine metabolism; dTTP biosynthesis. In terms of biological role, catalyzes the reductive methylation of 2'-deoxyuridine-5'-monophosphate (dUMP) to 2'-deoxythymidine-5'-monophosphate (dTMP) while utilizing 5,10-methylenetetrahydrofolate (mTHF) as the methyl donor and reductant in the reaction, yielding dihydrofolate (DHF) as a by-product. This enzymatic reaction provides an intracellular de novo source of dTMP, an essential precursor for DNA biosynthesis. This chain is Thymidylate synthase, found in Xanthomonas oryzae pv. oryzae (strain MAFF 311018).